The following is a 216-amino-acid chain: Probable transaldolase (216 aa).

Lys-84 acts as the Schiff-base intermediate with substrate in catalysis.

Belongs to the transaldolase family. Type 3B subfamily.

It localises to the cytoplasm. The catalysed reaction is D-sedoheptulose 7-phosphate + D-glyceraldehyde 3-phosphate = D-erythrose 4-phosphate + beta-D-fructose 6-phosphate. It functions in the pathway carbohydrate degradation; pentose phosphate pathway; D-glyceraldehyde 3-phosphate and beta-D-fructose 6-phosphate from D-ribose 5-phosphate and D-xylulose 5-phosphate (non-oxidative stage): step 2/3. In terms of biological role, transaldolase is important for the balance of metabolites in the pentose-phosphate pathway. In Exiguobacterium sp. (strain ATCC BAA-1283 / AT1b), this protein is Probable transaldolase.